The primary structure comprises 497 residues: MHEKSLTELRAALDAKQCSAVELAQTYLKRIEDRKALNAFVHVDAQQTLAQAQAADALIAAGNAGPLTGLPIAHKDVFVTRNWRSTAGSKMLENYTSPFDATVVDRLAQAGMVCVGKTNMDEFAMGSSNENSYFGPVQNPWDRKAVPGGSSGGSAAAVAARLAPAATGTDTGGSIRQPASFSGITGIKPTYGRVSRYGMIAFASSLDQGGPMAQTAADCALLLNAMGGFDERDSTSLTHDHEDYTRYLGQDWSGAGNARDKPLAGLRVGLPKEYFGAGLADDVRASIDAALKQYEALGATLVEVSLPKTELSIPVYYVIAPAEASSNLSRFDGVRYGHRAAEYRDLLDMYKKSRAEGFGPEVKRRILVGTYVLSHGYYDAYYLQAQKIRRIIAQDFQEAFRHCDVIMGPVAPSVAWDIGAKGDDPVQMYLADIYTLSVSLAGLPGMSVPCGFGAGANAQRPVGLQIIGNYFNEARMLQVADAFQRATDWHRMAPAGV.

Residues K75 and S150 each act as charge relay system in the active site. S174 functions as the Acyl-ester intermediate in the catalytic mechanism.

It belongs to the amidase family. GatA subfamily. Heterotrimer of A, B and C subunits.

The enzyme catalyses L-glutamyl-tRNA(Gln) + L-glutamine + ATP + H2O = L-glutaminyl-tRNA(Gln) + L-glutamate + ADP + phosphate + H(+). Its function is as follows. Allows the formation of correctly charged Gln-tRNA(Gln) through the transamidation of misacylated Glu-tRNA(Gln) in organisms which lack glutaminyl-tRNA synthetase. The reaction takes place in the presence of glutamine and ATP through an activated gamma-phospho-Glu-tRNA(Gln). This Paraburkholderia phymatum (strain DSM 17167 / CIP 108236 / LMG 21445 / STM815) (Burkholderia phymatum) protein is Glutamyl-tRNA(Gln) amidotransferase subunit A.